Reading from the N-terminus, the 337-residue chain is 6-phosphogluconolactonase (337 aa).

Belongs to the cycloisomerase 2 family.

The catalysed reaction is 6-phospho-D-glucono-1,5-lactone + H2O = 6-phospho-D-gluconate + H(+). It participates in carbohydrate degradation; pentose phosphate pathway; D-ribulose 5-phosphate from D-glucose 6-phosphate (oxidative stage): step 2/3. In terms of biological role, catalyzes the hydrolysis of 6-phosphogluconolactone to 6-phosphogluconate. The chain is 6-phosphogluconolactonase from Blochmanniella pennsylvanica (strain BPEN).